The chain runs to 517 residues: Bifunctional purine biosynthesis protein PurH (517 aa).

The MGS-like domain maps to 1–145; that stretch reads MSPLALVSVS…KNHKYVSVLV (145 aa).

This sequence belongs to the PurH family.

It carries out the reaction (6R)-10-formyltetrahydrofolate + 5-amino-1-(5-phospho-beta-D-ribosyl)imidazole-4-carboxamide = 5-formamido-1-(5-phospho-D-ribosyl)imidazole-4-carboxamide + (6S)-5,6,7,8-tetrahydrofolate. The catalysed reaction is IMP + H2O = 5-formamido-1-(5-phospho-D-ribosyl)imidazole-4-carboxamide. Its pathway is purine metabolism; IMP biosynthesis via de novo pathway; 5-formamido-1-(5-phospho-D-ribosyl)imidazole-4-carboxamide from 5-amino-1-(5-phospho-D-ribosyl)imidazole-4-carboxamide (10-formyl THF route): step 1/1. It participates in purine metabolism; IMP biosynthesis via de novo pathway; IMP from 5-formamido-1-(5-phospho-D-ribosyl)imidazole-4-carboxamide: step 1/1. The chain is Bifunctional purine biosynthesis protein PurH from Prochlorococcus marinus (strain MIT 9215).